Consider the following 1252-residue polypeptide: DNA-directed RNA polymerase subunit beta (1252 aa).

This sequence belongs to the RNA polymerase beta chain family. The RNAP catalytic core consists of 2 alpha, 1 beta, 1 beta' and 1 omega subunit. When a sigma factor is associated with the core the holoenzyme is formed, which can initiate transcription.

It carries out the reaction RNA(n) + a ribonucleoside 5'-triphosphate = RNA(n+1) + diphosphate. Functionally, DNA-dependent RNA polymerase catalyzes the transcription of DNA into RNA using the four ribonucleoside triphosphates as substrates. The chain is DNA-directed RNA polymerase subunit beta from Chlamydia felis (strain Fe/C-56) (Chlamydophila felis).